Reading from the N-terminus, the 302-residue chain is Sulfate adenylyltransferase subunit 2 (302 aa).

The segment at 280–302 is disordered; it reads RQGRLIDSDQSASMEQKKRQGYF.

This sequence belongs to the PAPS reductase family. CysD subfamily. Heterodimer composed of CysD, the smaller subunit, and CysN.

It catalyses the reaction sulfate + ATP + H(+) = adenosine 5'-phosphosulfate + diphosphate. The protein operates within sulfur metabolism; hydrogen sulfide biosynthesis; sulfite from sulfate: step 1/3. Its function is as follows. With CysN forms the ATP sulfurylase (ATPS) that catalyzes the adenylation of sulfate producing adenosine 5'-phosphosulfate (APS) and diphosphate, the first enzymatic step in sulfur assimilation pathway. APS synthesis involves the formation of a high-energy phosphoric-sulfuric acid anhydride bond driven by GTP hydrolysis by CysN coupled to ATP hydrolysis by CysD. This chain is Sulfate adenylyltransferase subunit 2, found in Shewanella baltica (strain OS223).